The following is a 202-amino-acid chain: Probable septum site-determining protein MinC (202 aa).

It belongs to the MinC family. As to quaternary structure, interacts with MinD and FtsZ.

Functionally, cell division inhibitor that blocks the formation of polar Z ring septums. Rapidly oscillates between the poles of the cell to destabilize FtsZ filaments that have formed before they mature into polar Z rings. Prevents FtsZ polymerization. This chain is Probable septum site-determining protein MinC, found in Dictyoglomus turgidum (strain DSM 6724 / Z-1310).